We begin with the raw amino-acid sequence, 307 residues long: MVSLTTSEVHPTMGVKTFSAGISACLADIITFPLDTAKVRLQIQGEGQTSSTIRYKGVLGTITTLAKTEGWPKLYSGLPAGIQRQISFASLRIGLYDTVQEYFSSGKETPPTLGNRISAGLMTGGVAVFIGQPTEVVKVRLQAQSHLHGIKPRYTGTYNAYRIIATTESFSTLWKGTTPNLMRNVIINRTELVTYDLMKGALVNNQILADDVPCHLLSALVAGFCTTFLASPADVVKTRFINSLPGQYPSVPSCAMTMLTKEGPTAFFKGFVPSFLRLASWNVIMFVCFEQLKKELMKSRQTMDCTT.

At M1–H10 the chain is on the mitochondrial intermembrane side. A helical membrane pass occupies residues P11–F32. Solcar repeat units follow at residues P11–Y102, P111–A201, and D210–E295. Residues P33–K73 lie on the Mitochondrial matrix side of the membrane. K56 serves as a coordination point for fatty acid 16:0. Residues L74–Y96 form a helical membrane-spanning segment. Residues D97–R116 lie on the Mitochondrial intermembrane side of the membrane. Residues I117–P133 form a helical membrane-spanning segment. Over T134–T178 the chain is Mitochondrial matrix. A helical transmembrane segment spans residues P179–Y195. The Mitochondrial intermembrane portion of the chain corresponds to D196 to V212. The helical transmembrane segment at P213–P232 threads the bilayer. The Mitochondrial matrix portion of the chain corresponds to A233–A266. C254 bears the Cysteine sulfenic acid (-SOH) mark. Residues F267–F289 traverse the membrane as a helical segment. Residue K269 participates in fatty acid 16:0 binding. Topologically, residues E290–T307 are mitochondrial intermembrane.

This sequence belongs to the mitochondrial carrier (TC 2.A.29) family. Most probably functions as a monomer. Binds one purine nucleotide per monomer. However, has also been suggested to function as a homodimer or a homotetramer. Tightly associates with cardiolipin in the mitochondrion inner membrane; may stabilize and regulate its activity. May undergo sulfenylation upon cold exposure. May increase the sensitivity of UCP1 thermogenic function to the activation by noradrenaline probably through structural effects. In terms of processing, may undergo ubiquitin-mediated proteasomal degradation.

It localises to the mitochondrion inner membrane. It catalyses the reaction H(+)(in) = H(+)(out). Its activity is regulated as follows. Has no constitutive proton transporter activity and has to be activated by long-chain fatty acids/LCFAs. Inhibited by purine nucleotides. Both purine nucleotides and LCFAs bind the cytosolic side of the transporter and directly compete to activate or inhibit it. Activated by noradrenaline and reactive oxygen species. Despite lacking canonical translational encoding for selenocysteine, a small pool of the protein has been observed to selectively incorporate selenocysteine at 'Cys-254'. Selenocysteine-modified protein is highly sensitive to redox modification and may constitute a pool of protein highly sensitive to activation by elevated levels of reactive oxygen species (ROS). Functionally, mitochondrial protein responsible for thermogenic respiration, a specialized capacity of brown adipose tissue and beige fat that participates in non-shivering adaptive thermogenesis to temperature and diet variations and more generally to the regulation of energy balance. Functions as a long-chain fatty acid/LCFA and proton symporter, simultaneously transporting one LCFA and one proton through the inner mitochondrial membrane. However, LCFAs remaining associated with the transporter via their hydrophobic tails, it results in an apparent transport of protons activated by LCFAs. Thereby, dissipates the mitochondrial proton gradient and converts the energy of substrate oxydation into heat instead of ATP. Regulates the production of reactive oxygen species/ROS by mitochondria. In Dicrostonyx groenlandicus (Northern collared lemming), this protein is Mitochondrial brown fat uncoupling protein 1.